The following is a 316-amino-acid chain: Protein C4 (316 aa).

This sequence belongs to the poxviridae OPG031 protein family.

The protein localises to the host cytoplasm. It localises to the host nucleus. In terms of biological role, plays a role in the inhibition of host NF-kappa-B activation. Mechanistically, blocks the subunit p65/RELA translocation into the host nucleus. In Vaccinia virus (strain Western Reserve) (VACV), this protein is Protein C4 (OPG031).